The following is a 287-amino-acid chain: Pentatricopeptide repeat-containing protein At4g18975, chloroplastic (287 aa).

A chloroplast-targeting transit peptide spans 1–34 (MALCNLNPTQGIFPLQGLSKSQEFICFSLLQSPR). 2 PPR repeats span residues 165–199 (TMGT…HTRS) and 201–235 (PRRL…KVSP).

It belongs to the PPR family. P subfamily.

Its subcellular location is the plastid. It localises to the chloroplast. The protein is Pentatricopeptide repeat-containing protein At4g18975, chloroplastic of Arabidopsis thaliana (Mouse-ear cress).